The sequence spans 154 residues: Small ribosomal subunit protein uS15 (154 aa).

Over residues 1–14 (MAPVPHRSRHKKGR) the composition is skewed to basic residues. Residues 1-24 (MAPVPHRSRHKKGRSGSVRPAHPT) form a disordered region.

Belongs to the universal ribosomal protein uS15 family. In terms of assembly, part of the 30S ribosomal subunit.

This Pyrobaculum arsenaticum (strain DSM 13514 / JCM 11321 / PZ6) protein is Small ribosomal subunit protein uS15.